Consider the following 395-residue polypeptide: GDP-mannose 4,6 dehydratase (395 aa).

Composition is skewed to polar residues over residues 1-13 (MLNT…STSD) and 24-36 (ESSS…QNGT). Residues 1–44 (MLNTRLIAMSTSDGAPETKKQRPESSSNGSKDQNGTEAGAEGDS) are disordered. Residues 53–58 (GITGQD), 109–110 (DM), 131–135 (LAAQS), and Y146 each bind NADP(+). T178 is an active-site residue. Active-site nucleophile residues include E180 and Y202. K206, H232, and R237 together coordinate NADP(+).

This sequence belongs to the NAD(P)-dependent epimerase/dehydratase family. GDP-mannose 4,6-dehydratase subfamily. NADP(+) serves as cofactor.

It carries out the reaction GDP-alpha-D-mannose = GDP-4-dehydro-alpha-D-rhamnose + H2O. The protein operates within nucleotide-sugar biosynthesis; GDP-L-fucose biosynthesis via de novo pathway; GDP-L-fucose from GDP-alpha-D-mannose: step 1/2. Catalyzes the conversion of GDP-D-mannose to GDP-4-dehydro-6-deoxy-D-mannose (also known as GDP-4-keto-6-deoxy-D-mannose or GDP-4-dehydro-alpha-D-rhamnose), an essential step in the synthesis of GDP-fucose from GDP-mannose. The polypeptide is GDP-mannose 4,6 dehydratase (Gmd) (Drosophila melanogaster (Fruit fly)).